The chain runs to 207 residues: Large ribosomal subunit protein uL4 (207 aa).

The interval 45–78 (RQGTHAVKNRSARRGGGRKPWRQKGTGRARQGSI) is disordered. Basic residues predominate over residues 51-71 (VKNRSARRGGGRKPWRQKGTG).

Belongs to the universal ribosomal protein uL4 family. Part of the 50S ribosomal subunit.

One of the primary rRNA binding proteins, this protein initially binds near the 5'-end of the 23S rRNA. It is important during the early stages of 50S assembly. It makes multiple contacts with different domains of the 23S rRNA in the assembled 50S subunit and ribosome. Functionally, forms part of the polypeptide exit tunnel. This Lactiplantibacillus plantarum (strain ATCC BAA-793 / NCIMB 8826 / WCFS1) (Lactobacillus plantarum) protein is Large ribosomal subunit protein uL4.